Here is a 327-residue protein sequence, read N- to C-terminus: uncharacterized protein (327 aa).

Disordered stretches follow at residues 127-170 (LSEF…GIYR) and 298-327 (NFED…LKRR). A phosphoserine mark is found at Ser-153, Ser-154, and Ser-309. The segment covering 317–327 (YRKRKKNLKRR) has biased composition (basic residues).

This is an uncharacterized protein from Schizosaccharomyces pombe (strain 972 / ATCC 24843) (Fission yeast).